The sequence spans 278 residues: Formamidopyrimidine-DNA glycosylase (278 aa).

Pro-2 functions as the Schiff-base intermediate with DNA in the catalytic mechanism. Glu-3 (proton donor) is an active-site residue. Lys-58 functions as the Proton donor; for beta-elimination activity in the catalytic mechanism. Residues His-91, Arg-109, and Arg-158 each contribute to the DNA site. An FPG-type zinc finger spans residues 243–277 (KVYDRKGLPCKVCKTPISQMVQGQRTTYFCSQCQK). The Proton donor; for delta-elimination activity role is filled by Arg-267.

Belongs to the FPG family. Monomer. Requires Zn(2+) as cofactor.

The catalysed reaction is Hydrolysis of DNA containing ring-opened 7-methylguanine residues, releasing 2,6-diamino-4-hydroxy-5-(N-methyl)formamidopyrimidine.. It catalyses the reaction 2'-deoxyribonucleotide-(2'-deoxyribose 5'-phosphate)-2'-deoxyribonucleotide-DNA = a 3'-end 2'-deoxyribonucleotide-(2,3-dehydro-2,3-deoxyribose 5'-phosphate)-DNA + a 5'-end 5'-phospho-2'-deoxyribonucleoside-DNA + H(+). Involved in base excision repair of DNA damaged by oxidation or by mutagenic agents. Acts as a DNA glycosylase that recognizes and removes damaged bases. Has a preference for oxidized purines, such as 7,8-dihydro-8-oxoguanine (8-oxoG). Has AP (apurinic/apyrimidinic) lyase activity and introduces nicks in the DNA strand. Cleaves the DNA backbone by beta-delta elimination to generate a single-strand break at the site of the removed base with both 3'- and 5'-phosphates. The sequence is that of Formamidopyrimidine-DNA glycosylase from Polynucleobacter necessarius subsp. necessarius (strain STIR1).